Consider the following 273-residue polypeptide: MNNRVHQGHLARKRFGQNFLNDQFVIDSIVSAINPQKGQAMVEIGPGLAALTEPVGERLDQLTVIELDRDLAARLQTHPFLGPKLTIYQQDAMTFNFGELAEKMGQPLRVFGNLPYNISTPLMFHLFSYTDAIADMHFMLQKEVVNRLVAGPNSKAYGRLSVMAQYYCNVIPVLEVPPSAFTPPPKVDSAVVRLVPHATMPYPVKDVRVLSRITTEAFNQRRKTIRNSLGNLFSVEVLTGMGIDPAMRAENISVAQYCQMANYLAENAPLQES.

Residues N18, L20, G45, E66, D91, and N113 each coordinate S-adenosyl-L-methionine.

This sequence belongs to the class I-like SAM-binding methyltransferase superfamily. rRNA adenine N(6)-methyltransferase family. RsmA subfamily.

It is found in the cytoplasm. The catalysed reaction is adenosine(1518)/adenosine(1519) in 16S rRNA + 4 S-adenosyl-L-methionine = N(6)-dimethyladenosine(1518)/N(6)-dimethyladenosine(1519) in 16S rRNA + 4 S-adenosyl-L-homocysteine + 4 H(+). Functionally, specifically dimethylates two adjacent adenosines (A1518 and A1519) in the loop of a conserved hairpin near the 3'-end of 16S rRNA in the 30S particle. May play a critical role in biogenesis of 30S subunits. This chain is Ribosomal RNA small subunit methyltransferase A, found in Escherichia fergusonii (strain ATCC 35469 / DSM 13698 / CCUG 18766 / IAM 14443 / JCM 21226 / LMG 7866 / NBRC 102419 / NCTC 12128 / CDC 0568-73).